A 558-amino-acid chain; its full sequence is Dihydroxy-acid dehydratase (558 aa).

Asp81 contributes to the Mg(2+) binding site. Position 122 (Cys122) interacts with [2Fe-2S] cluster. Mg(2+) contacts are provided by Asp123 and Lys124. At Lys124 the chain carries N6-carboxylysine. Residue Cys195 participates in [2Fe-2S] cluster binding. Mg(2+) is bound at residue Glu447. Residue Ser473 is the Proton acceptor of the active site.

The protein belongs to the IlvD/Edd family. Homodimer. The cofactor is [2Fe-2S] cluster. Requires Mg(2+) as cofactor.

The enzyme catalyses (2R)-2,3-dihydroxy-3-methylbutanoate = 3-methyl-2-oxobutanoate + H2O. It catalyses the reaction (2R,3R)-2,3-dihydroxy-3-methylpentanoate = (S)-3-methyl-2-oxopentanoate + H2O. Its pathway is amino-acid biosynthesis; L-isoleucine biosynthesis; L-isoleucine from 2-oxobutanoate: step 3/4. The protein operates within amino-acid biosynthesis; L-valine biosynthesis; L-valine from pyruvate: step 3/4. In terms of biological role, functions in the biosynthesis of branched-chain amino acids. Catalyzes the dehydration of (2R,3R)-2,3-dihydroxy-3-methylpentanoate (2,3-dihydroxy-3-methylvalerate) into 2-oxo-3-methylpentanoate (2-oxo-3-methylvalerate) and of (2R)-2,3-dihydroxy-3-methylbutanoate (2,3-dihydroxyisovalerate) into 2-oxo-3-methylbutanoate (2-oxoisovalerate), the penultimate precursor to L-isoleucine and L-valine, respectively. In Bacillus pumilus (strain SAFR-032), this protein is Dihydroxy-acid dehydratase.